The chain runs to 349 residues: Holliday junction branch migration complex subunit RuvB (349 aa).

Positions 1–183 are large ATPase domain (RuvB-L); sequence MTDPSRLVTP…FGIPIRLNFY (183 aa). Residues Leu-22, Arg-23, Gly-64, Lys-67, Thr-68, Thr-69, 130 to 132, Arg-173, Tyr-183, and Arg-220 contribute to the ATP site; that span reads EDF. A Mg(2+)-binding site is contributed by Thr-68. Residues 184–254 form a small ATPAse domain (RuvB-S) region; it reads TIEELESIVT…IADHALGALE (71 aa). A head domain (RuvB-H) region spans residues 257–349; that stretch reads SAGLDAMDRR…GLFGDTGDQE (93 aa). DNA contacts are provided by Arg-293, Arg-312, and Arg-317.

Belongs to the RuvB family. Homohexamer. Forms an RuvA(8)-RuvB(12)-Holliday junction (HJ) complex. HJ DNA is sandwiched between 2 RuvA tetramers; dsDNA enters through RuvA and exits via RuvB. An RuvB hexamer assembles on each DNA strand where it exits the tetramer. Each RuvB hexamer is contacted by two RuvA subunits (via domain III) on 2 adjacent RuvB subunits; this complex drives branch migration. In the full resolvosome a probable DNA-RuvA(4)-RuvB(12)-RuvC(2) complex forms which resolves the HJ.

Its subcellular location is the cytoplasm. It carries out the reaction ATP + H2O = ADP + phosphate + H(+). The RuvA-RuvB-RuvC complex processes Holliday junction (HJ) DNA during genetic recombination and DNA repair, while the RuvA-RuvB complex plays an important role in the rescue of blocked DNA replication forks via replication fork reversal (RFR). RuvA specifically binds to HJ cruciform DNA, conferring on it an open structure. The RuvB hexamer acts as an ATP-dependent pump, pulling dsDNA into and through the RuvAB complex. RuvB forms 2 homohexamers on either side of HJ DNA bound by 1 or 2 RuvA tetramers; 4 subunits per hexamer contact DNA at a time. Coordinated motions by a converter formed by DNA-disengaged RuvB subunits stimulates ATP hydrolysis and nucleotide exchange. Immobilization of the converter enables RuvB to convert the ATP-contained energy into a lever motion, pulling 2 nucleotides of DNA out of the RuvA tetramer per ATP hydrolyzed, thus driving DNA branch migration. The RuvB motors rotate together with the DNA substrate, which together with the progressing nucleotide cycle form the mechanistic basis for DNA recombination by continuous HJ branch migration. Branch migration allows RuvC to scan DNA until it finds its consensus sequence, where it cleaves and resolves cruciform DNA. This chain is Holliday junction branch migration complex subunit RuvB, found in Rhodopseudomonas palustris (strain TIE-1).